Consider the following 445-residue polypeptide: Protein trichome berefringence-like 7 (445 aa).

A helical; Signal-anchor for type II membrane protein membrane pass occupies residues 69–89 (IIAGTIVSFLVIIAGGYLYVV). The GDS motif signature appears at 188 to 190 (GDS). The short motif at 418–432 (DCSHWCLPGVPDIWN) is the DCXHWCLPGXXDXWN motif element.

The protein belongs to the PC-esterase family. TBL subfamily.

It localises to the membrane. In terms of biological role, may act as a bridging protein that binds pectin and other cell wall polysaccharides. Probably involved in maintaining esterification of pectins. May be involved in the specific O-acetylation of cell wall polymers. In Arabidopsis thaliana (Mouse-ear cress), this protein is Protein trichome berefringence-like 7 (TBL7).